The following is a 166-amino-acid chain: MSLPEKAFPVSWDQFHRDARALSWRLSGANKGQWKAIVCITRGGLVPAAIIARELGIRVIETVCVASYHDYTSQGQLQVLKEITPALLADDGAGVLIIDDLTDTGKTAGIVRAMMPKAHFATVYAKPKGRPLVDTFVTEVSQDTWIYFPWDMGFTYQKPIADDHAG.

5-phospho-alpha-D-ribose 1-diphosphate is bound by residues 42–43 (RG) and 99–107 (DDLTDTGKT). Asp-100 contacts Mg(2+). Residues Asp-103 and Ile-146 each coordinate guanine. Positions 103 and 146 each coordinate xanthine. GMP contacts are provided by residues 103–107 (DTGKT) and 145–146 (WI).

It belongs to the purine/pyrimidine phosphoribosyltransferase family. XGPT subfamily. As to quaternary structure, homotetramer. It depends on Mg(2+) as a cofactor.

The protein localises to the cell inner membrane. It carries out the reaction GMP + diphosphate = guanine + 5-phospho-alpha-D-ribose 1-diphosphate. It catalyses the reaction XMP + diphosphate = xanthine + 5-phospho-alpha-D-ribose 1-diphosphate. The enzyme catalyses IMP + diphosphate = hypoxanthine + 5-phospho-alpha-D-ribose 1-diphosphate. It participates in purine metabolism; GMP biosynthesis via salvage pathway; GMP from guanine: step 1/1. The protein operates within purine metabolism; XMP biosynthesis via salvage pathway; XMP from xanthine: step 1/1. Purine salvage pathway enzyme that catalyzes the transfer of the ribosyl-5-phosphate group from 5-phospho-alpha-D-ribose 1-diphosphate (PRPP) to the N9 position of the 6-oxopurines guanine and xanthine to form the corresponding ribonucleotides GMP (guanosine 5'-monophosphate) and XMP (xanthosine 5'-monophosphate), with the release of PPi. To a lesser extent, also acts on hypoxanthine. This is Xanthine-guanine phosphoribosyltransferase from Mesorhizobium japonicum (strain LMG 29417 / CECT 9101 / MAFF 303099) (Mesorhizobium loti (strain MAFF 303099)).